The sequence spans 314 residues: Olfactory receptor 1E2 (314 aa).

At 1-25 (MMGQNQTSISDFLLLGLPIQPEQQN) the chain is on the extracellular side. Asn-5 carries N-linked (GlcNAc...) asparagine glycosylation. Residues 26 to 49 (LCYALFLAMYLTTLLGNLLIIVLI) traverse the membrane as a helical segment. Over 50–57 (RLDSHLHT) the chain is Cytoplasmic. The helical transmembrane segment at 58–79 (PMYLFLSNLSFSDLCFSSVTIP) threads the bilayer. Over 80-100 (KLLQNMQNQDPSIPYADCLTQ) the chain is Extracellular. Cys-97 and Cys-189 are joined by a disulfide. A helical transmembrane segment spans residues 101–120 (MYFFLLFGDLESFLLVAMAY). Topologically, residues 121–139 (DRYVAICFPLHYTAIMSPM) are cytoplasmic. A helical transmembrane segment spans residues 140-158 (LCLSLVALSWVLTTFHAML). The Extracellular segment spans residues 159–195 (HTLLMARLCFCADNVIPHFFCDMSALLKLACSDTRVN). The chain crosses the membrane as a helical span at residues 196-219 (EWVIFIMGGLIVVIPFLLILGSYA). Residues 220–236 (RIVSSILKVPSSKGICK) lie on the Cytoplasmic side of the membrane. A helical membrane pass occupies residues 237 to 259 (AFSTCGSHLSVVSLFYGTIIGLY). The Extracellular segment spans residues 260-272 (LCPSANSSTLKET). Asn-265 carries N-linked (GlcNAc...) asparagine glycosylation. A helical membrane pass occupies residues 273–292 (VMAMMYTVVTPMLNPFIYSL). Residues 293-314 (RNRDMKGALERVICKRKNPFLL) are Cytoplasmic-facing.

The protein belongs to the G-protein coupled receptor 1 family.

Its subcellular location is the cell membrane. In terms of biological role, odorant receptor. This is Olfactory receptor 1E2 (OR1E2) from Gorilla gorilla gorilla (Western lowland gorilla).